Reading from the N-terminus, the 450-residue chain is UDP-N-acetylglucosamine--peptide N-acetylglucosaminyltransferase stabilizing protein GtfB (450 aa).

The protein belongs to the GtfB family. Forms a heterotetramer with 2 subunits each of GtfA and GtfB. Part of the accessory SecA2/SecY2 protein translocation apparatus required to export cell wall protein GspB.

Its subcellular location is the cell membrane. It participates in protein modification; protein glycosylation. Required for polymorphic O-glycosylation of GspB, a serine-rich repeat cell wall protein encoded upstream in the same operon. A substrate-binding protein that is part of the accessory SecA2/SecY2 system specifically required to export GspB. The GtfA-GtfB complex adds GlcNAc from UDP-GlcNAc to GspB, attaching the first sugar residue. Upon coexpression in E.coli with GtfA glycosylates GspB constructs. Binds the GspB protein substrate; alone this subunit only recognizes partially glycosylated GspB, but is constrained by GtfA to also recognize unglycosylated protein. The enzyme probably modifies its tertiary conformation by opening and closing its intersubunit interfaces to accomodate the increasingly glycosylated substrate. In Streptococcus gordonii, this protein is UDP-N-acetylglucosamine--peptide N-acetylglucosaminyltransferase stabilizing protein GtfB.